Reading from the N-terminus, the 197-residue chain is Pyridoxal 5'-phosphate synthase subunit PdxT (197 aa).

Residue G52–S54 coordinates L-glutamine. The active-site Nucleophile is C83. L-glutamine-binding positions include R115 and I142–R143. Residues H178 and E180 each act as charge relay system in the active site.

Belongs to the glutaminase PdxT/SNO family. As to quaternary structure, in the presence of PdxS, forms a dodecamer of heterodimers. Only shows activity in the heterodimer.

It carries out the reaction aldehydo-D-ribose 5-phosphate + D-glyceraldehyde 3-phosphate + L-glutamine = pyridoxal 5'-phosphate + L-glutamate + phosphate + 3 H2O + H(+). It catalyses the reaction L-glutamine + H2O = L-glutamate + NH4(+). The protein operates within cofactor biosynthesis; pyridoxal 5'-phosphate biosynthesis. Functionally, catalyzes the hydrolysis of glutamine to glutamate and ammonia as part of the biosynthesis of pyridoxal 5'-phosphate. The resulting ammonia molecule is channeled to the active site of PdxS. The chain is Pyridoxal 5'-phosphate synthase subunit PdxT from Korarchaeum cryptofilum (strain OPF8).